We begin with the raw amino-acid sequence, 315 residues long: Tetraacyldisaccharide 4'-kinase (315 aa).

52–59 (TVGGTGKT) provides a ligand contact to ATP.

The protein belongs to the LpxK family.

It catalyses the reaction a lipid A disaccharide + ATP = a lipid IVA + ADP + H(+). It participates in glycolipid biosynthesis; lipid IV(A) biosynthesis; lipid IV(A) from (3R)-3-hydroxytetradecanoyl-[acyl-carrier-protein] and UDP-N-acetyl-alpha-D-glucosamine: step 6/6. Transfers the gamma-phosphate of ATP to the 4'-position of a tetraacyldisaccharide 1-phosphate intermediate (termed DS-1-P) to form tetraacyldisaccharide 1,4'-bis-phosphate (lipid IVA). The polypeptide is Tetraacyldisaccharide 4'-kinase (Ruthia magnifica subsp. Calyptogena magnifica).